A 257-amino-acid polypeptide reads, in one-letter code: Imidazole glycerol phosphate synthase subunit HisF (257 aa).

Active-site residues include Asp-12 and Asp-131.

This sequence belongs to the HisA/HisF family. In terms of assembly, heterodimer of HisH and HisF.

It localises to the cytoplasm. It carries out the reaction 5-[(5-phospho-1-deoxy-D-ribulos-1-ylimino)methylamino]-1-(5-phospho-beta-D-ribosyl)imidazole-4-carboxamide + L-glutamine = D-erythro-1-(imidazol-4-yl)glycerol 3-phosphate + 5-amino-1-(5-phospho-beta-D-ribosyl)imidazole-4-carboxamide + L-glutamate + H(+). It participates in amino-acid biosynthesis; L-histidine biosynthesis; L-histidine from 5-phospho-alpha-D-ribose 1-diphosphate: step 5/9. Its function is as follows. IGPS catalyzes the conversion of PRFAR and glutamine to IGP, AICAR and glutamate. The HisF subunit catalyzes the cyclization activity that produces IGP and AICAR from PRFAR using the ammonia provided by the HisH subunit. The sequence is that of Imidazole glycerol phosphate synthase subunit HisF from Mycobacteroides abscessus (strain ATCC 19977 / DSM 44196 / CCUG 20993 / CIP 104536 / JCM 13569 / NCTC 13031 / TMC 1543 / L948) (Mycobacterium abscessus).